The sequence spans 243 residues: Coenzyme F420 hydrogenase subunit gamma (243 aa).

2 consecutive 4Fe-4S ferredoxin-type domains span residues 182–210 (IKEVINKSLCMGCGTCAAACQVNAIDMVE) and 211–241 (AKPNINSEFCIKCGICSAQCPRVRFPEIIRK). Residues Cys-191, Cys-194, Cys-197, Cys-201, Cys-220, Cys-223, Cys-226, and Cys-230 each contribute to the [4Fe-4S] cluster site.

The protein belongs to the FrhG family. As to quaternary structure, complex of alpha, beta and gamma subunits. It depends on Ni(2+) as a cofactor. Iron-sulfur cluster serves as cofactor. FAD is required as a cofactor.

The enzyme catalyses oxidized coenzyme F420-(gamma-L-Glu)(n) + H2 + H(+) = reduced coenzyme F420-(gamma-L-Glu)(n). In terms of biological role, reduces the physiological low-potential two-electron acceptor coenzyme F420, and the artificial one-electron acceptor methylviologen. This Methanococcus voltae protein is Coenzyme F420 hydrogenase subunit gamma (frhG).